The chain runs to 315 residues: Ribosomal RNA small subunit methyltransferase H (315 aa).

S-adenosyl-L-methionine is bound by residues 35–37, aspartate 55, phenylalanine 80, aspartate 102, and glutamine 109; that span reads GGH.

Belongs to the methyltransferase superfamily. RsmH family.

Its subcellular location is the cytoplasm. The catalysed reaction is cytidine(1402) in 16S rRNA + S-adenosyl-L-methionine = N(4)-methylcytidine(1402) in 16S rRNA + S-adenosyl-L-homocysteine + H(+). Its function is as follows. Specifically methylates the N4 position of cytidine in position 1402 (C1402) of 16S rRNA. This Buchnera aphidicola subsp. Baizongia pistaciae (strain Bp) protein is Ribosomal RNA small subunit methyltransferase H.